The primary structure comprises 504 residues: Patatin-like phospholipase domain-containing protein 2 (504 aa).

Topologically, residues 1–8 (MFPREKTW) are cytoplasmic. The helical transmembrane segment at 9-29 (NISFAGCGFLGVYYVGVASCL) threads the bilayer. The PNPLA domain maps to 10–179 (ISFAGCGFLG…SDNLPLYELK (170 aa)). Residues 14–19 (GCGFLG) carry the GXGXXG motif. Residues 30–42 (REHAPFLVANATH) are Extracellular-facing. A glycan (N-linked (GlcNAc...) asparagine) is linked at Asn-39. Residues 43–63 (IYGASAGALTATALVTGVCLG) traverse the membrane as a helical segment. The GXSXG signature appears at 45–49 (GASAG). The active-site Nucleophile is Ser-47. Over 64–137 (EAGAKFIEVS…IISHFNSKDE (74 aa)) the chain is Cytoplasmic. Lys-92 is covalently cross-linked (Glycyl lysine isopeptide (Lys-Gly) (interchain with G-Cter in ubiquitin)). A helical membrane pass occupies residues 138–158 (LIQANVCSGFIPVYCGLIPPS). At 159–329 (LQGVRYVDGG…TTLSNMLPVR (171 aa)) the chain is on the extracellular side. Asp-166 (proton acceptor) is an active-site residue. Positions 166–168 (DGG) match the DGA/G motif. The helical transmembrane segment at 330-350 (LATAMMVPYTLPLESALSFTI) threads the bilayer. Over 351-504 (RLLEWLPDVP…ARPVIGALGL (154 aa)) the chain is Cytoplasmic. Ser-372 is modified (phosphoserine; in vitro). The residue at position 404 (Ser-404) is a Phosphoserine; by PKA and FAM20C. Ser-428 carries the post-translational modification Phosphoserine. The disordered stretch occupies residues 463–492 (APADPAPAPADPASPQHQLAGPAPLLSTPA).

Interacts with ABHD5; this association stimulates PNPLA2 triglyceride hydrolase activity. Interacts with SERPINF1; this interaction stimulates the phospholipase A2 activity of PNPLA2. Despite a colocalization in lipid droplets, it probably does not interact with PLIN. Interacts with PLIN5; prevents interaction with ABHD5. Interacts with FAF2. Phosphorylation at Ser-404 by PKA is increased during fasting and moderate intensity exercise, and moderately increases lipolytic activity. Phosphorylation at Ser-404 is increased upon beta-adrenergic stimulation. Post-translationally, ubiquitinated by PEX2 in response to reactive oxygen species (ROS), leading to its degradation. Ubiquitination is stimulated by LDAH. As to expression, highest expression in adipose tissue. Also detected in heart, skeletal muscle, and portions of the gastrointestinal tract. Detected in normal retina and retinoblastoma cells. Detected in retinal pigment epithelium and, at lower intensity, in the inner segments of photoreceptors and in the ganglion cell layer of the neural retina (at protein level).

The protein resides in the lipid droplet. It is found in the cell membrane. The protein localises to the cytoplasm. The catalysed reaction is a triacylglycerol + H2O = a diacylglycerol + a fatty acid + H(+). It catalyses the reaction a triacylglycerol + H2O = a 1,2-diacylglycerol + a fatty acid + H(+). It carries out the reaction a triacylglycerol + H2O = a 1,3-diacylglycerol + a fatty acid + H(+). The enzyme catalyses a triacyl-sn-glycerol + H2O = a 1,3-diacyl-sn-glycerol + a fatty acid + H(+). The catalysed reaction is a triacyl-sn-glycerol + H2O = a 2,3-diacyl-sn-glycerol + a fatty acid + H(+). It catalyses the reaction a 1-acylglycerol + a 1,3-diacylglycerol = a triacylglycerol + glycerol. It carries out the reaction a 1-acylglycerol + a 1,2-diacylglycerol = a triacylglycerol + glycerol. The enzyme catalyses 2 a 1-acylglycerol = a 1,2-diacylglycerol + glycerol. The catalysed reaction is a triacylglycerol + all-trans-retinol = an all-trans-retinyl ester + a diacylglycerol. It catalyses the reaction 1,2-di-(9Z-octadecenoyl)-glycerol + (9Z)-octadecenoate + H(+) = 1,2,3-tri-(9Z-octadecenoyl)-glycerol + H2O. It carries out the reaction 1,2,3-tri-(9Z-octadecenoyl)-glycerol + H2O = 1,3-di-(9Z-octadecenoyl)-glycerol + (9Z)-octadecenoate + H(+). The enzyme catalyses 1-(9Z-octadecenoyl)-glycerol + 1,3-di-(9Z-octadecenoyl)-glycerol = 1,2,3-tri-(9Z-octadecenoyl)-glycerol + glycerol. The catalysed reaction is 1-(9Z-octadecenoyl)-glycerol + 1,2-di-(9Z-octadecenoyl)-glycerol = 1,2,3-tri-(9Z-octadecenoyl)-glycerol + glycerol. It catalyses the reaction 2 1-(9Z-octadecenoyl)-glycerol = 1,2-di-(9Z-octadecenoyl)-glycerol + glycerol. It carries out the reaction 1,2,3-tri-(9Z-octadecenoyl)-glycerol + all-trans-retinol = all-trans-retinyl 9Z-octadecenoate + di-(9Z)-octadecenoylglycerol. The enzyme catalyses 1,2,3-tri-(9Z)-hexadecenoylglycerol + H2O = 1,3-di-(9Z)-hexadecenoylglycerol + (9Z)-hexadecenoate + H(+). The catalysed reaction is 1,2,3-tri-(9Z,12Z)-octadecadienoylglycerol + H2O = 1,3-di-(9Z,12Z)-octadecadienoylglycerol + (9Z,12Z)-octadecadienoate + H(+). It catalyses the reaction 1,2,3-tri-(9Z,12Z,15Z)-octadecatrienoylglycerol + H2O = 1,3-di-(9Z,12Z,15Z)-octadecatrienoylglycerol + (9Z,12Z,15Z)-octadecatrienoate + H(+). It carries out the reaction 1,3-di-(9Z)-octadecenoyl-2-hexadecanoylglycerol + H2O = 1,3-di-(9Z-octadecenoyl)-glycerol + hexadecanoate + H(+). The enzyme catalyses 1,2-di-(9Z)-octadecenoyl-3-hexadecanoyl-sn-glycerol + H2O = 1-(9Z)-octadecenoyl-3-hexadecanoyl-sn-glycerol + (9Z)-octadecenoate + H(+). The catalysed reaction is 1-hexadecanoyl-2,3-di-(9Z)-octadecenoyl-sn-glycerol + H2O = 1-hexadecanoyl-3-(9Z)-octadecenoyl-sn-glycerol + (9Z)-octadecenoate + H(+). It catalyses the reaction 1,2,3-tri-(9Z-octadecenoyl)-glycerol + H2O = 2,3-di-(9Z)-octadecenoyl-sn-glycerol + (9Z)-octadecenoate + H(+). It carries out the reaction 1,2,3-tri-(9Z)-hexadecenoylglycerol + H2O = 2,3-di-(9Z)-hexadecenoyl-sn-glycerol + (9Z)-hexadecenoate + H(+). The enzyme catalyses 1,2,3-tri-(9Z,12Z)-octadecadienoylglycerol + H2O = 2,3-di-(9Z,12Z)-octadecadienoyl-sn-glycerol + (9Z,12Z)-octadecadienoate + H(+). The catalysed reaction is 1,2,3-tri-(9Z,12Z,15Z)-octadecatrienoylglycerol + H2O = 2,3-di-(9Z,12Z,15Z)-octadecatrienoyl-sn-glycerol + (9Z,12Z,15Z)-octadecatrienoate + H(+). It catalyses the reaction 1,3-di-(9Z)-octadecenoyl-2-hexadecanoylglycerol + H2O = 2-hexadecanoyl-3-(9Z)-octadecenoyl-sn-glycerol + (9Z)-octadecenoate + H(+). It carries out the reaction 1-hexadecanoyl-2,3-di-(9Z)-octadecenoyl-sn-glycerol + H2O = 2,3-di-(9Z)-octadecenoyl-sn-glycerol + hexadecanoate + H(+). The enzyme catalyses 1,2-di-(9Z)-octadecenoyl-3-hexadecanoyl-sn-glycerol + H2O = 2-(9Z-octadecenoyl)-3-hexadecanoyl-sn-glycerol + (9Z)-octadecenoate + H(+). The catalysed reaction is a 1,2-diacyl-sn-glycero-3-phosphocholine + H2O = a 1-acyl-sn-glycero-3-phosphocholine + a fatty acid + H(+). It catalyses the reaction 1,2,3-tri-(9Z-octadecenoyl)-glycerol + 9-hydroxy-octadecanoate = 9-(9Z-octadecenoyloxy)-octadecanoate + 2,3-di-(9Z)-octadecenoyl-sn-glycerol. It carries out the reaction 1-hexadecanoyl-2,3-di-(9Z)-octadecenoyl-sn-glycerol + 9-hydroxy-octadecanoate = 9-hexadecanoyloxy-octadecanoate + 2,3-di-(9Z)-octadecenoyl-sn-glycerol. The enzyme catalyses 1,2,3-tri-(10Z)-heptadecenoylglycerol + 9-hydroxy-octadecanoate = 2,3-di-(10Z-heptadecenoyl)-sn-glycerol + 9-(10Z-heptadecenoyloxy)-octadecanoate. The catalysed reaction is 1,2,3-tri-(9Z,12Z)-octadecadienoylglycerol + 9-hydroxy-octadecanoate = 2,3-di-(9Z,12Z)-octadecadienoyl-sn-glycerol + 9-(9Z,12Z-octadecadienoyloxy)-octadecanoate. It catalyses the reaction 1,2,3-tri-(9Z)-hexadecenoylglycerol + 9-hydroxy-octadecanoate = 2,3-di-(9Z)-hexadecenoyl-sn-glycerol + 9-(9Z-hexadecenoyloxy)-octadecanoate. It carries out the reaction 9-hydroxy-octadecanoate + 1,2-di-(9Z-octadecenoyl)-sn-glycerol = 9-(9Z-octadecenoyloxy)-octadecanoate + 2-(9Z-octadecenoyl)-glycerol. The enzyme catalyses 1-hexadecanoyl-2,3-di-(9Z)-octadecenoyl-sn-glycerol + 9-hydroxy-octadecanoate = 1-hexadecanoyl-3-(9Z)-octadecenoyl-sn-glycerol + 9-(9Z-octadecenoyloxy)-octadecanoate. It functions in the pathway glycerolipid metabolism; triacylglycerol degradation. The triglyceride lipase activity is inhibited by BEL ((E)-6-(bromomethylene)-3-(1-naphthalenyl)-2H-tetrahydropyran-2-one), a suicide substrate inhibitor. No differences in the acylglycerol transacylase was detected in the presence or absence of ATP. Catalyzes the initial step in triglyceride hydrolysis in adipocyte and non-adipocyte lipid droplets. Exhibits a strong preference for the hydrolysis of long-chain fatty acid esters at the sn-2 position of the glycerol backbone and acts coordinately with LIPE/HLS and DGAT2 within the lipolytic cascade. Also possesses acylglycerol transacylase and phospholipase A2 activities. Transfers fatty acid from triglyceride to retinol, hydrolyzes retinylesters, and generates 1,3-diacylglycerol from triglycerides. Regulates adiposome size and may be involved in the degradation of adiposomes. Catalyzes the formation of an ester bond between hydroxy fatty acids and fatty acids derived from triglycerides or diglycerides to generate fatty acid esters of hydroxy fatty acids (FAHFAs) in adipocytes. Acts antagonistically with LDAH in regulation of cellular lipid stores. Inhibits LDAH-stimulated lipid droplet fusion. May play an important role in energy homeostasis. May play a role in the response of the organism to starvation, enhancing hydrolysis of triglycerides and providing free fatty acids to other tissues to be oxidized in situations of energy depletion. The polypeptide is Patatin-like phospholipase domain-containing protein 2 (Homo sapiens (Human)).